Here is a 58-residue protein sequence, read N- to C-terminus: Small ribosomal subunit protein bS21 (58 aa).

The segment covering 31 to 42 has biased composition (basic and acidic residues); sequence EIRKREHYEKPS. The disordered stretch occupies residues 31–58; it reads EIRKREHYEKPSVKRKKKSEAARKRKYN. Residues 43-58 are compositionally biased toward basic residues; that stretch reads VKRKKKSEAARKRKYN.

This sequence belongs to the bacterial ribosomal protein bS21 family.

This is Small ribosomal subunit protein bS21 from Agathobacter rectalis (strain ATCC 33656 / DSM 3377 / JCM 17463 / KCTC 5835 / VPI 0990) (Eubacterium rectale).